The following is a 319-amino-acid chain: HPr kinase/phosphorylase (319 aa).

Active-site residues include His-141 and Lys-162. 156 to 163 (GNSGVGKS) is an ATP binding site. Ser-163 contacts Mg(2+). Residue Asp-180 is the Proton acceptor; for phosphorylation activity. Proton donor; for dephosphorylation activity of the active site. The segment at 204-213 (MEIRGIGIID) is important for the catalytic mechanism of both phosphorylation and dephosphorylation. A Mg(2+)-binding site is contributed by Glu-205. Residue Arg-246 is part of the active site. The important for the catalytic mechanism of dephosphorylation stretch occupies residues 267–272 (PVKVGR).

Belongs to the HPrK/P family. In terms of assembly, homohexamer. Mg(2+) is required as a cofactor.

The catalysed reaction is [HPr protein]-L-serine + ATP = [HPr protein]-O-phospho-L-serine + ADP + H(+). It carries out the reaction [HPr protein]-O-phospho-L-serine + phosphate + H(+) = [HPr protein]-L-serine + diphosphate. In terms of biological role, catalyzes the ATP- as well as the pyrophosphate-dependent phosphorylation of a specific serine residue in HPr, a phosphocarrier protein of the phosphoenolpyruvate-dependent sugar phosphotransferase system (PTS). HprK/P also catalyzes the pyrophosphate-producing, inorganic phosphate-dependent dephosphorylation (phosphorolysis) of seryl-phosphorylated HPr (P-Ser-HPr). The two antagonistic activities of HprK/P are regulated by several intracellular metabolites, which change their concentration in response to the absence or presence of rapidly metabolisable carbon sources (glucose, fructose, etc.) in the growth medium. Therefore, by controlling the phosphorylation state of HPr, HPrK/P is a sensor enzyme that plays a major role in the regulation of carbon metabolism and sugar transport: it mediates carbon catabolite repression (CCR), and regulates PTS-catalyzed carbohydrate uptake and inducer exclusion. This Lactobacillus gasseri (strain ATCC 33323 / DSM 20243 / BCRC 14619 / CIP 102991 / JCM 1131 / KCTC 3163 / NCIMB 11718 / NCTC 13722 / AM63) protein is HPr kinase/phosphorylase.